A 490-amino-acid polypeptide reads, in one-letter code: MEGQDEVSAREQHFHSQVRESTICFLLFAILYIVSYFIIIRYKRKSDEQEDEDAVVNRISLFLSTFTLAVSAGAVLLLPFSIISNEILLAFPHNYYIQWLNGSLIHGLWNLASLFSNLCLFVLMPFAFFFLESEGFAGLKKGIRARILETLVMLLLLALLILGMVWVASALIDSDAASMESLYDLWEFYLPYLYSCISLMGCLLLLLCTPVGLSRMFTVMGQLLVKPAILEDLDEQIYMITLEEEALQRRLHGLSSSVEYNVMELEQELENVKILKTKLERRKKASAWERNLVYPAVMVLLLIETSISVLLVACNILCLLVDETAMPKGTRGPGIGSASLSTFGFVGAALEIILIFYLMVSSVVGFYSLRFFGNFTPKKDDTTMTKIIGNCVSILVLSSALPVMSRTLGITRFDLLGDFGRFNWLGNFYIVLSYNLLFAIMTTLCLIRKFTSAVREELFKALGLHKLHLSDTSRDSETTKPSANGHQKAL.

Topologically, residues 1–19 (MEGQDEVSAREQHFHSQVR) are extracellular. A helical transmembrane segment spans residues 20–40 (ESTICFLLFAILYIVSYFIII). The Cytoplasmic portion of the chain corresponds to 41–62 (RYKRKSDEQEDEDAVVNRISLF). The chain crosses the membrane as a helical span at residues 63–83 (LSTFTLAVSAGAVLLLPFSII). Residues 84–110 (SNEILLAFPHNYYIQWLNGSLIHGLWN) are Extracellular-facing. Residues 111-131 (LASLFSNLCLFVLMPFAFFFL) form a helical membrane-spanning segment. At 132–151 (ESEGFAGLKKGIRARILETL) the chain is on the cytoplasmic side. Residues 152 to 172 (VMLLLLALLILGMVWVASALI) traverse the membrane as a helical segment. The Extracellular portion of the chain corresponds to 173 to 187 (DSDAASMESLYDLWE). A helical membrane pass occupies residues 188–208 (FYLPYLYSCISLMGCLLLLLC). The Cytoplasmic portion of the chain corresponds to 209 to 291 (TPVGLSRMFT…RKKASAWERN (83 aa)). The stretch at 256–287 (SSVEYNVMELEQELENVKILKTKLERRKKASA) forms a coiled coil. The helical transmembrane segment at 292–312 (LVYPAVMVLLLIETSISVLLV) threads the bilayer. Topologically, residues 313-339 (ACNILCLLVDETAMPKGTRGPGIGSAS) are extracellular. A helical transmembrane segment spans residues 340–360 (LSTFGFVGAALEIILIFYLMV). At 361-383 (SSVVGFYSLRFFGNFTPKKDDTT) the chain is on the cytoplasmic side. Residues 384–404 (MTKIIGNCVSILVLSSALPVM) traverse the membrane as a helical segment. The Extracellular portion of the chain corresponds to 405–426 (SRTLGITRFDLLGDFGRFNWLG). A helical transmembrane segment spans residues 427–447 (NFYIVLSYNLLFAIMTTLCLI). Residues 448–490 (RKFTSAVREELFKALGLHKLHLSDTSRDSETTKPSANGHQKAL) lie on the Cytoplasmic side of the membrane.

The protein belongs to the LIMR family.

The protein resides in the membrane. Putative membrane receptor. This chain is Limb region 1 protein (Lmbr1), found in Mus musculus (Mouse).